Reading from the N-terminus, the 187-residue chain is Elongation factor P (187 aa).

This sequence belongs to the elongation factor P family.

Its subcellular location is the cytoplasm. The protein operates within protein biosynthesis; polypeptide chain elongation. Its function is as follows. Involved in peptide bond synthesis. Stimulates efficient translation and peptide-bond synthesis on native or reconstituted 70S ribosomes in vitro. Probably functions indirectly by altering the affinity of the ribosome for aminoacyl-tRNA, thus increasing their reactivity as acceptors for peptidyl transferase. In Flavobacterium psychrophilum (strain ATCC 49511 / DSM 21280 / CIP 103535 / JIP02/86), this protein is Elongation factor P.